Consider the following 107-residue polypeptide: DNA-directed RNA polymerase subunit omega (107 aa).

It belongs to the RNA polymerase subunit omega family. As to quaternary structure, the RNAP catalytic core consists of 2 alpha, 1 beta, 1 beta' and 1 omega subunit. When a sigma factor is associated with the core the holoenzyme is formed, which can initiate transcription.

It catalyses the reaction RNA(n) + a ribonucleoside 5'-triphosphate = RNA(n+1) + diphosphate. Its function is as follows. Promotes RNA polymerase assembly. Latches the N- and C-terminal regions of the beta' subunit thereby facilitating its interaction with the beta and alpha subunits. This is DNA-directed RNA polymerase subunit omega from Oenococcus oeni (strain ATCC BAA-331 / PSU-1).